Consider the following 190-residue polypeptide: Adenine phosphoribosyltransferase (190 aa).

Belongs to the purine/pyrimidine phosphoribosyltransferase family. Homodimer.

It is found in the cytoplasm. It catalyses the reaction AMP + diphosphate = 5-phospho-alpha-D-ribose 1-diphosphate + adenine. Its pathway is purine metabolism; AMP biosynthesis via salvage pathway; AMP from adenine: step 1/1. Its function is as follows. Catalyzes a salvage reaction resulting in the formation of AMP, that is energically less costly than de novo synthesis. The chain is Adenine phosphoribosyltransferase from Treponema pallidum (strain Nichols).